Here is a 154-residue protein sequence, read N- to C-terminus: Ribonuclease 8 (154 aa).

Positions 1–27 (MAPARAGCCPLLLLLLGLRVAQIPVSA) are cleaved as a signal peptide. The Proton acceptor role is filled by H42. Cystine bridges form between C64-C118, C82-C133, and C89-C96. Substrate contacts are provided by residues 65–69 (KDLNT) and K90. The active-site Proton donor is the H149.

Belongs to the pancreatic ribonuclease family.

It is found in the secreted. Its function is as follows. Has a low ribonuclease activity. The sequence is that of Ribonuclease 8 (RNASE8) from Miopithecus talapoin (Angolan talapoin).